The following is a 747-amino-acid chain: Mediator of RNA polymerase II transcription subunit 25 (747 aa).

An interaction with the Mediator complex region spans residues methionine 1–leucine 226. Disordered stretches follow at residues glycine 233–valine 274 and leucine 299–glycine 390. Composition is skewed to pro residues over residues glutamine 263–tyrosine 272 and proline 326–serine 342. The tract at residues leucine 389–asparagine 543 is interaction with VP16. The interaction with CREBBP stretch occupies residues valine 395–lysine 545. Residues glutamine 548–isoleucine 747 form a disordered region. Interaction with RARA regions lie at residues alanine 564–proline 653 and proline 640–glutamine 707. Over residues alanine 598–alanine 611 the composition is skewed to low complexity. A compositionally biased stretch (pro residues) spans glutamine 612–isoleucine 634. Residues leucine 646–leucine 650 carry the LXXLL motif motif. 3 stretches are compositionally biased toward pro residues: residues asparagine 652–glutamine 664, proline 673–histidine 683, and leucine 691–proline 713. Arginine 725 carries the asymmetric dimethylarginine modification. A compositionally biased stretch (acidic residues) spans methionine 738–isoleucine 747.

It belongs to the Mediator complex subunit 25 family. Component of the Mediator complex, which is composed of MED1, MED4, MED6, MED7, MED8, MED9, MED10, MED11, MED12, MED13, MED13L, MED14, MED15, MED16, MED17, MED18, MED19, MED20, MED21, MED22, MED23, MED24, MED25, MED26, MED27, MED29, MED30, MED31, CCNC, CDK8 and CDC2L6/CDK11. The MED12, MED13, CCNC and CDK8 subunits form a distinct module termed the CDK8 module. Mediator containing the CDK8 module is less active than Mediator lacking this module in supporting transcriptional activation. Individual preparations of the Mediator complex lacking one or more distinct subunits have been variously termed ARC, CRSP, DRIP, PC2, SMCC and TRAP. Interacts with CREBBP. Interacts with ESR1, GR, RARA, RXRA and THRB in a ligand-dependent fashion. Binds the Herpes simplex virus activator VP16. As to expression, ubiquitously expressed. Highest levels in brain, heart, kidney, peripheral leukocytes, placenta, skeletal muscle and spleen.

The protein localises to the nucleus. Functionally, component of the Mediator complex, a coactivator involved in the regulated transcription of nearly all RNA polymerase II-dependent genes. Mediator functions as a bridge to convey information from gene-specific regulatory proteins to the basal RNA polymerase II transcription machinery. Mediator is recruited to promoters by direct interactions with regulatory proteins and serves as a scaffold for the assembly of a functional preinitiation complex with RNA polymerase II and the general transcription factors. Required for RARA/RXRA-mediated transcription. The sequence is that of Mediator of RNA polymerase II transcription subunit 25 (MED25) from Homo sapiens (Human).